Here is a 585-residue protein sequence, read N- to C-terminus: MGQGDESERIVINVGGTRHQTYRSTLRTLPGTRLAWLAEPDAHSHFDYDPRADEFFFDRHPGVFAHILNYYRTGKLHCPADVCGPLYEEELAFWGIDETDVEPCCWMTYRQHRDAEEALDSFGGAPLDNSADDADADGPGDSGDGEDELEMTKRLALSDSPDGRPGGFWRRWQPRIWALFEDPYSSRYARYVAFASLFFILVSITTFCLETHERFNPIVNKTEIENVRNGTQVRYYREAETEAFLTYIEGVCVVWFTFEFLMRVVFCPNKVEFIKNSLNIIDFVAILPFYLEVGLSGLSSKAAKDVLGFLRVVRFVRILRIFKLTRHFVGLRVLGHTLRASTNEFLLLIIFLALGVLIFATMIYYAERIGAQPNDPSASEHTHFKNIPIGFWWAVVTMTTLGYGDMYPQTWSGMLVGALCALAGVLTIAMPVPVIVNNFGMYYSLAMAKQKLPKKKKKHIPRPPQLGSPNYCKSVVNSPHHSTQSDTCPLAQEEILEINRADSKLNGEVAKAALANEDCPHIDQALTPDEGLPFTRSGTRERYGPCFLLSTGEYACPPGGGMRKDLCKESPVIAKYMPTEAVRVT.

The Cytoplasmic portion of the chain corresponds to 1-190 (MGQGDESERI…EDPYSSRYAR (190 aa)). Ser-44 carries the post-translational modification Phosphoserine. Zn(2+) contacts are provided by His-77, Cys-83, Cys-104, and Cys-105. The disordered stretch occupies residues 121 to 147 (SFGGAPLDNSADDADADGPGDSGDGED). 4 positions are modified to phosphoserine: Ser-130, Ser-142, Ser-158, and Ser-160. Residues 130–147 (SADDADADGPGDSGDGED) are compositionally biased toward acidic residues. Residues 191 to 209 (YVAFASLFFILVSITTFCL) traverse the membrane as a helical segment. N-linked (GlcNAc...) asparagine glycosylation is found at Asn-220 and Asn-229. A helical membrane pass occupies residues 248 to 267 (IEGVCVVWFTFEFLMRVVFC). Residues 268–276 (PNKVEFIKN) are Cytoplasmic-facing. The helical transmembrane segment at 277–295 (SLNIIDFVAILPFYLEVGL) threads the bilayer. Residues 309 to 331 (FLRVVRFVRILRIFKLTRHFVGL) form a helical; Voltage-sensor membrane-spanning segment. Over 332 to 344 (RVLGHTLRASTNE) the chain is Cytoplasmic. A helical transmembrane segment spans residues 345–366 (FLLLIIFLALGVLIFATMIYYA). Residues Thr-400, Leu-401, Gly-402, and Tyr-403 each coordinate K(+). The Selectivity filter signature appears at 400–405 (TLGYGD). A helical membrane pass occupies residues 415-436 (LVGALCALAGVLTIAMPVPVIV). Over 437-585 (NNFGMYYSLA…YMPTEAVRVT (149 aa)) the chain is Cytoplasmic. Ser-474 is modified (phosphoserine). Thr-483 is subject to Phosphothreonine.

This sequence belongs to the potassium channel family. C (Shaw) (TC 1.A.1.2) subfamily. Kv3.1/KCNC1 sub-subfamily. As to quaternary structure, homotetramer. Homomultimer. Heteromultimer with KCNG3, KCNG4 and KCNV2. Heteromultimer with KCNC2. Heterotetramer with KCNC3. Interacts with the ancillary subunits KCNE1 and KCNE2; the interaction modulates channel activity. N-glycosylated; contains sialylated glycans. As to expression, expressed in brain. Expressed in globus pallidal neurons of the basal ganglia (at protein level). Detected on Purkinje cells in the cerebellum molecular layer (at protein level).

It is found in the cell membrane. The protein localises to the cell projection. The protein resides in the axon. It localises to the presynaptic cell membrane. The catalysed reaction is K(+)(in) = K(+)(out). Voltage-gated potassium channel that opens in response to the voltage difference across the membrane and through which potassium ions pass in accordance with their electrochemical gradient. The mechanism is time-dependent and inactivation is slow. Plays an important role in the rapid repolarization of fast-firing brain neurons. Can form functional homotetrameric channels and heterotetrameric channels that contain variable proportions of KCNC2, and possibly other family members as well. Contributes to fire sustained trains of very brief action potentials at high frequency in pallidal neurons. This Rattus norvegicus (Rat) protein is Voltage-gated potassium channel KCNC1.